Here is a 179-residue protein sequence, read N- to C-terminus: MRAKLDLFTHLLLEWGSVHNLSGAKNHQDIEHNIQDSLQVLDFIAPFKSCLDIGSGAGFPAIPLSLACSNARFILLEPNAKKVAFLHHVKLALNLNNLEIQRMRIEHVSPQSVLVDLITSRALMNAQNLIALSAPFLREQGHFLFYKGSHLRTEIACADHECHVYGKRVYFYSQRRDFA.

S-adenosyl-L-methionine contacts are provided by residues Gly-54, Phe-59, 105–106 (IE), and Arg-121.

The protein belongs to the methyltransferase superfamily. RNA methyltransferase RsmG family.

The protein localises to the cytoplasm. The enzyme catalyses guanosine(527) in 16S rRNA + S-adenosyl-L-methionine = N(7)-methylguanosine(527) in 16S rRNA + S-adenosyl-L-homocysteine. Functionally, specifically methylates the N7 position of guanine in position 527 of 16S rRNA. In Helicobacter bizzozeronii, this protein is Ribosomal RNA small subunit methyltransferase G.